The chain runs to 325 residues: MPRPVLLIHGGAGDIPDSRIAGKFKGIKEALRCAWGSLVPASGAKGGALDAVETAVRSMELDENFNAGYGSCLNTDGQVEMEASLMEGQDLRAGCVTLLRDVMHPITVARRLMEKQRHTFIGGEAAQELALSTGSERLPANALVTEGARFTLQQFKEQLTQGKDPFFARTELAAEQKTDPSGETVGAVAMDHNGQIVVGTSTGGITGKWPGRIGDTPILGSGTYADNARGGVSTTGHGETIMRYNLAQRILAAIEHKGMSAQAAADQECREMTRRIGGTGGAIVVGHAGDLGISFTSQRMAWGYIQDDTIFYGIEGQVVHQEPLS.

The active-site Nucleophile is threonine 184. Residues 212-215 and 235-238 each bind substrate; these read RIGD and TGHG.

It belongs to the Ntn-hydrolase family. Heterodimer of an alpha and beta chain produced by autocleavage. Cleaved into an alpha and beta chain by autocatalysis; this activates the enzyme. The N-terminal residue of the beta subunit is responsible for the nucleophile hydrolase activity.

It carries out the reaction L-asparagine + H2O = L-aspartate + NH4(+). The enzyme catalyses Cleavage of a beta-linked Asp residue from the N-terminus of a polypeptide.. Its function is as follows. Has both L-asparaginase and beta-aspartyl peptidase activity. Does not have aspartylglucosaminidase activity and is inactive toward GlcNAc-L-Asn. Likewise, has no activity toward glutamine. The chain is Probable isoaspartyl peptidase/L-asparaginase GA20639 from Drosophila pseudoobscura pseudoobscura (Fruit fly).